The following is a 187-amino-acid chain: Shikimate kinase (187 aa).

Position 19–24 (19–24 (GSGKST)) interacts with ATP. Ser23 provides a ligand contact to Mg(2+). Substrate contacts are provided by Asp41, Arg65, and Gly87. Residue Arg124 participates in ATP binding. Arg143 is a substrate binding site. Position 160 (Arg160) interacts with ATP.

The protein belongs to the shikimate kinase family. Monomer. It depends on Mg(2+) as a cofactor.

It is found in the cytoplasm. It catalyses the reaction shikimate + ATP = 3-phosphoshikimate + ADP + H(+). Its pathway is metabolic intermediate biosynthesis; chorismate biosynthesis; chorismate from D-erythrose 4-phosphate and phosphoenolpyruvate: step 5/7. In terms of biological role, catalyzes the specific phosphorylation of the 3-hydroxyl group of shikimic acid using ATP as a cosubstrate. In Rippkaea orientalis (strain PCC 8801 / RF-1) (Cyanothece sp. (strain PCC 8801)), this protein is Shikimate kinase.